We begin with the raw amino-acid sequence, 511 residues long: T-complex protein 1 subunit eta (511 aa).

This sequence belongs to the TCP-1 chaperonin family. Component of the T-complex protein 1 (TCP1) complex.

Its subcellular location is the cytoplasm. In terms of biological role, molecular chaperone; assists the folding of proteins upon ATP hydrolysis. In Encephalitozoon cuniculi (strain GB-M1) (Microsporidian parasite), this protein is T-complex protein 1 subunit eta (CCT7).